The chain runs to 973 residues: UvrABC system protein A (973 aa).

34 to 41 lines the ATP pocket; the sequence is GLSGSGKS. ABC transporter domains are found at residues 331–609 and 629–958; these read WAKS…PKSL and PKKG…HFLK. 662–669 contacts ATP; sequence GVSGGGKS. The C4-type zinc finger occupies 761–787; that stretch reads CEACQGDGVIKIEMHFLPDVYVTCDVC.

This sequence belongs to the ABC transporter superfamily. UvrA family. As to quaternary structure, forms a heterotetramer with UvrB during the search for lesions.

The protein localises to the cytoplasm. The UvrABC repair system catalyzes the recognition and processing of DNA lesions. UvrA is an ATPase and a DNA-binding protein. A damage recognition complex composed of 2 UvrA and 2 UvrB subunits scans DNA for abnormalities. When the presence of a lesion has been verified by UvrB, the UvrA molecules dissociate. The polypeptide is UvrABC system protein A (Agrobacterium fabrum (strain C58 / ATCC 33970) (Agrobacterium tumefaciens (strain C58))).